Reading from the N-terminus, the 133-residue chain is Interferon-induced transmembrane protein 3 (133 aa).

The Cytoplasmic portion of the chain corresponds to 1–57; that stretch reads MNHTVQTFFSPVNSGQPPNYEMLKEEHEVAVLGAPHNPAPPTSTVIHIRSETSVPDH. Residue tyrosine 20 is modified to Phosphotyrosine. Residue lysine 24 forms a Glycyl lysine isopeptide (Lys-Gly) (interchain with G-Cter in ubiquitin) linkage. The helical intramembrane region spans 58–78; sequence VVWSLFNTLFMNPCCLGFIAF. Residues 60-93 are interaction with SPP1; that stretch reads WSLFNTLFMNPCCLGFIAFAYSVKSRDRKMVGDV. S-palmitoyl cysteine attachment occurs at residues cysteine 71 and cysteine 72. Residues 79–107 are Cytoplasmic-facing; the sequence is AYSVKSRDRKMVGDVTGAQAYASTAKCLN. Residues lysine 83, lysine 88, and lysine 104 each participate in a glycyl lysine isopeptide (Lys-Gly) (interchain with G-Cter in ubiquitin) cross-link. Cysteine 105 is lipidated: S-palmitoyl cysteine. Residues 108–128 form a helical membrane-spanning segment; that stretch reads IWALILGILMTILLIVIPVLI. An interaction with VAPA region spans residues 108-133; the sequence is IWALILGILMTILLIVIPVLIFQAYG. The Extracellular segment spans residues 129–133; the sequence is FQAYG.

Belongs to the CD225/Dispanin family. In terms of assembly, interacts with ATP6V0B. Interacts with CD81. Interacts with SPP1; the interaction reduces OPN expression. Interacts with VAPA. Interacts with BRI3 (isoforms 1 and 2); the interaction with isoform 2 is weaker than with isoform 1. Post-translationally, palmitoylation on membrane-proximal cysteines controls clustering in membrane compartments and antiviral activity against influenza virus and hepatitis C virus (HCV). Has no effect on anti-SARS-CoV-2 activity. In terms of processing, not glycosylated. Polyubiquitinated with both 'Lys-48' and 'Lys-63' linkages. Ubiquitination negatively regulates antiviral activity. Lys-24 is the most prevalent ubiquitination site. Post-translationally, phosphorylation at Tyr-20 is required for endosomal and lysosomal location.

It localises to the cell membrane. Its subcellular location is the late endosome membrane. The protein localises to the early endosome membrane. The protein resides in the lysosome membrane. It is found in the cytoplasm. It localises to the perinuclear region. In terms of biological role, IFN-induced antiviral protein which disrupts intracellular cholesterol homeostasis. Inhibits the entry of viruses to the host cell cytoplasm by preventing viral fusion with cholesterol depleted endosomes. May inactivate new enveloped viruses which buds out of the infected cell, by letting them go out with a cholesterol depleted membrane. Active against multiple viruses, including influenza A virus, SARS coronaviruses (SARS-CoV and SARS-CoV-2), Marburg virus (MARV), Ebola virus (EBOV), Dengue virus (DNV), West Nile virus (WNV), human immunodeficiency virus type 1 (HIV-1), hepatitis C virus (HCV) and vesicular stomatitis virus (VSV). Can inhibit: influenza virus hemagglutinin protein-mediated viral entry, MARV and EBOV GP1,2-mediated viral entry, SARS-CoV and SARS-CoV-2 S protein-mediated viral entry and VSV G protein-mediated viral entry. Plays a critical role in the structural stability and function of vacuolar ATPase (v-ATPase). Establishes physical contact with the v-ATPase of endosomes which is critical for proper clathrin localization and is also required for the function of the v-ATPase to lower the pH in phagocytic endosomes thus establishing an antiviral state. In hepatocytes, IFITM proteins act in a coordinated manner to restrict HCV infection by targeting the endocytosed HCV virion for lysosomal degradation. IFITM2 and IFITM3 display anti-HCV activity that may complement the anti-HCV activity of IFITM1 by inhibiting the late stages of HCV entry, possibly in a coordinated manner by trapping the virion in the endosomal pathway and targeting it for degradation at the lysosome. Exerts opposing activities on SARS-CoV-2, including amphipathicity-dependent restriction of virus at endosomes and amphipathicity-independent enhancement of infection at the plasma membrane. The chain is Interferon-induced transmembrane protein 3 from Homo sapiens (Human).